A 358-amino-acid chain; its full sequence is 3-isopropylmalate dehydrogenase (358 aa).

75 to 88 (GPKWETLPPEKQPE) serves as a coordination point for NAD(+). Arg96, Arg106, Arg135, and Asp225 together coordinate substrate. Residues Asp225, Asp249, and Asp253 each contribute to the Mg(2+) site. 283-295 (GSAPDIAGKGVAN) contacts NAD(+).

This sequence belongs to the isocitrate and isopropylmalate dehydrogenases family. LeuB type 1 subfamily. As to quaternary structure, homodimer. It depends on Mg(2+) as a cofactor. Mn(2+) is required as a cofactor.

It is found in the cytoplasm. It carries out the reaction (2R,3S)-3-isopropylmalate + NAD(+) = 4-methyl-2-oxopentanoate + CO2 + NADH. It functions in the pathway amino-acid biosynthesis; L-leucine biosynthesis; L-leucine from 3-methyl-2-oxobutanoate: step 3/4. Its function is as follows. Catalyzes the oxidation of 3-carboxy-2-hydroxy-4-methylpentanoate (3-isopropylmalate) to 3-carboxy-4-methyl-2-oxopentanoate. The product decarboxylates to 4-methyl-2 oxopentanoate. In Leptospira interrogans serogroup Icterohaemorrhagiae serovar copenhageni (strain Fiocruz L1-130), this protein is 3-isopropylmalate dehydrogenase.